Consider the following 1449-residue polypeptide: ABC transporter G family member 21 (1449 aa).

The segment covering 1 to 10 has biased composition (basic and acidic residues); that stretch reads MEEYELREIA. Positions 1–49 are disordered; the sequence is MEEYELREIALQEGGSNLDINTPPNYDNPVGDGSSPPDSPDIQKSENQF. Positions 14–25 are enriched in polar residues; sequence GGSNLDINTPPN. The ABC transporter 1 domain maps to 130-383; sequence ISFFNLFKPS…FIDLGFDCEP (254 aa). One can recognise an ABC transmembrane type-2 1 domain in the interval 488–731; it reads WGDKFSLISR…ILSVEGKDYL (244 aa). 5 helical membrane-spanning segments follow: residues 519 to 539, 577 to 597, 602 to 622, 634 to 654, and 747 to 767; these read IPGL…NAFL, IPLT…MFGL, GKFF…TNLF, ISQN…GYTI, and FITY…MEYF. The ABC transporter 2 domain maps to 818 to 1062; the sequence is FTWQNINYTV…LTSYFERYGV (245 aa). An ATP-binding site is contributed by 854–861; the sequence is GSSGAGKT. The ABC transmembrane type-2 2 domain maps to 1152–1386; sequence FYTYGSFIQS…PISEPLTGYV (235 aa). A run of 6 helical transmembrane segments spans residues 1155 to 1175, 1188 to 1208, 1228 to 1248, 1266 to 1286, 1296 to 1316, and 1423 to 1443; these read YGSF…FWSL, FIFE…PQFI, FAIS…TIFF, FYFW…GQAV, AHTL…VMVI, and LALI…FVYI.

Belongs to the ABC transporter superfamily. ABCG family. PDR (TC 3.A.1.205) subfamily.

It localises to the membrane. The sequence is that of ABC transporter G family member 21 (abcG21) from Dictyostelium discoideum (Social amoeba).